The primary structure comprises 882 residues: DNA polymerase 1 (882 aa).

The tract at residues 1–31 (MTKQLTLFDIPSSKPAKSEQNTQQSQQSAPV) is disordered. Positions 18–29 (SEQNTQQSQQSA) are enriched in polar residues.

It belongs to the DNA polymerase type-B family. As to quaternary structure, interacts with PCNA subunit PCNA2 and weakly with PCNA3.

The catalysed reaction is DNA(n) + a 2'-deoxyribonucleoside 5'-triphosphate = DNA(n+1) + diphosphate. DNA synthesis is stimulated by PCNA heterotrimers. Functionally, this polymerase possesses two enzymatic activities: DNA synthesis (polymerase) and an exonucleolytic activity that degrades single-stranded DNA in the 3'- to 5'-direction. DNA polymerase I, DNA ligase and the flap endonuclease may be constitutively associated with the PCNA heterotrimer forming a scanning complex able to couple DNA synthesis and Okazaki fragment maturation. This Saccharolobus solfataricus (strain ATCC 35092 / DSM 1617 / JCM 11322 / P2) (Sulfolobus solfataricus) protein is DNA polymerase 1 (dpo1).